We begin with the raw amino-acid sequence, 542 residues long: Chitinase 1 (542 aa).

The region spanning 68–506 is the GH18 domain; that stretch reads FNVLCYFTDW…NAAHEGLKRR (439 aa). Chitin contacts are provided by residues 186 to 187 and 213 to 216; these read QE and GGWS. E256 serves as the catalytic Proton donor. Chitin contacts are provided by residues Y257, 323–326, and W486; that span reads MTYD.

Belongs to the glycosyl hydrolase 18 family. In terms of assembly, semipurified toxin complex consists of at least YenA1-YenA2-YenB-YenC1-YenC2-Chi1-Chi2. The Yen-TC:K9 subcomplex is about 26 nm tall and 22 nm in diameter with 5-fold symmetry and 5 copies of YenA1, YenA2, Chi1 and Chi2; the chitinase subunits may be solvent accessible on the exterior the complex. The Yen-TC:K9 subcomplex has no insecticidal activity. The native complex with additional YenB, YenC1 and YenC2 subunits is 16 nm taller and is insecticidal; the toxicity-conferring subunits are present at about 1 copy each.

It is found in the secreted. The enzyme catalyses Random endo-hydrolysis of N-acetyl-beta-D-glucosaminide (1-&gt;4)-beta-linkages in chitin and chitodextrins.. Toxin complex is secreted when grown at 25 degrees Celsius or less; at higher temperatures the proteins are present intracellularly but not secreted. Functionally, part of an orally active toxin complex (TC) with strong insecticidal effects on larvae of the Coleoptera Costelytra zealandica, Acrossidius tasmania and Adoryphorus couloni and some Lepidoptera larvae. The TC has an endochitinase activity. This subunit might aid infection by degradation of the larval peritrophic membrane. The sequence is that of Chitinase 1 from Yersinia entomophaga.